We begin with the raw amino-acid sequence, 329 residues long: GTP 3',8-cyclase (329 aa).

One can recognise a Radical SAM core domain in the interval 8–234; sequence AFARKFYYLR…QLRQRSDGPA (227 aa). R17 provides a ligand contact to GTP. Residues C24 and C28 each contribute to the [4Fe-4S] cluster site. Y30 is an S-adenosyl-L-methionine binding site. C31 is a [4Fe-4S] cluster binding site. A GTP-binding site is contributed by R68. Residue G72 coordinates S-adenosyl-L-methionine. Residue T99 participates in GTP binding. S123 is an S-adenosyl-L-methionine binding site. K160 is a GTP binding site. M194 is an S-adenosyl-L-methionine binding site. Positions 257 and 260 each coordinate [4Fe-4S] cluster. 262 to 264 is a GTP binding site; sequence RLR. Position 274 (C274) interacts with [4Fe-4S] cluster.

Belongs to the radical SAM superfamily. MoaA family. As to quaternary structure, monomer and homodimer. The cofactor is [4Fe-4S] cluster.

It catalyses the reaction GTP + AH2 + S-adenosyl-L-methionine = (8S)-3',8-cyclo-7,8-dihydroguanosine 5'-triphosphate + 5'-deoxyadenosine + L-methionine + A + H(+). Its pathway is cofactor biosynthesis; molybdopterin biosynthesis. In terms of biological role, catalyzes the cyclization of GTP to (8S)-3',8-cyclo-7,8-dihydroguanosine 5'-triphosphate. The chain is GTP 3',8-cyclase from Escherichia coli O7:K1 (strain IAI39 / ExPEC).